Here is a 223-residue protein sequence, read N- to C-terminus: MAIIMAESSYERRVKALYEKQIRMEALEGKFIKKVYKFNSNLLDVKEAVLRHQRKVGKLQKVVMERREELEKRVSFMEELAQELEATKLRNLAMKDQIKQRKMLARQRKNEIMERIHTLSKTTGTYVNHEALPARVKGVTVLRGDKRDQLIPFDLNATDAEGLDSLCQHLESLNVDVSQWQQLVSLAMDVAMEARAPITPPKEAANCKSIIEIDLTSPTSHQA.

A coiled-coil region spans residues 51–116 (RHQRKVGKLQ…QRKNEIMERI (66 aa)).

It belongs to the SPC25 family. Component of the Ndc80 complex, which is composed of Ndc80, Nuf2 and Spc25.

It localises to the nucleus. The protein localises to the chromosome. The protein resides in the centromere. It is found in the kinetochore. In terms of biological role, acts as a component of the essential kinetochore-associated Ndc80 complex, which is required for chromosome segregation and spindle checkpoint activity during meiosis and mitosis. Required for kinetochore integrity and the organization of stable microtubule binding sites in the outer plate of the kinetochore. Participates in SAC signaling that responds specifically to disruptions in spindle microtubule dynamics. The NDC80 complex synergistically enhances the affinity of the SKA1 complex for microtubules and may allow the NDC80 complex to track depolymerizing microtubules. The chain is Kinetochore protein Spc25 from Drosophila yakuba (Fruit fly).